The primary structure comprises 693 residues: Methionine--tRNA ligase (693 aa).

The 'HIGH' region signature appears at 12-22; that stretch reads PYANGPLHLGH. Residues cysteine 143, cysteine 146, cysteine 156, and cysteine 159 each coordinate Zn(2+). The 'KMSKS' region motif lies at 330–334; the sequence is KMSKS. ATP is bound at residue lysine 333. Positions 557-576 are disordered; sequence APTAKNEAAKPAAPAAAKTE. One can recognise a tRNA-binding domain in the interval 590 to 693; the sequence is DFAKLDLRIG…SGAQPGMPVR (104 aa).

It belongs to the class-I aminoacyl-tRNA synthetase family. MetG type 1 subfamily. Homodimer. It depends on Zn(2+) as a cofactor.

It localises to the cytoplasm. It carries out the reaction tRNA(Met) + L-methionine + ATP = L-methionyl-tRNA(Met) + AMP + diphosphate. In terms of biological role, is required not only for elongation of protein synthesis but also for the initiation of all mRNA translation through initiator tRNA(fMet) aminoacylation. The polypeptide is Methionine--tRNA ligase (Stenotrophomonas maltophilia (strain R551-3)).